Here is a 58-residue protein sequence, read N- to C-terminus: Ribosome modulation factor (58 aa).

The interval 1-28 (MKRQKRDRFERAHTQGFKAGLHGRSKDN) is disordered.

This sequence belongs to the ribosome modulation factor family.

The protein localises to the cytoplasm. Its function is as follows. During stationary phase, converts 70S ribosomes to an inactive dimeric form (100S ribosomes). In Idiomarina loihiensis (strain ATCC BAA-735 / DSM 15497 / L2-TR), this protein is Ribosome modulation factor.